We begin with the raw amino-acid sequence, 393 residues long: Acetylornithine aminotransferase 1 (393 aa).

A N(2)-acetyl-L-ornithine-binding site is contributed by Arg131. 215-218 is a pyridoxal 5'-phosphate binding site; sequence DEVQ. Position 244 is an N6-(pyridoxal phosphate)lysine (Lys244). Residue Thr272 participates in N(2)-acetyl-L-ornithine binding. Thr273 is a binding site for pyridoxal 5'-phosphate.

This sequence belongs to the class-III pyridoxal-phosphate-dependent aminotransferase family. ArgD subfamily. Homodimer. Pyridoxal 5'-phosphate is required as a cofactor.

It is found in the cytoplasm. It carries out the reaction N(2)-acetyl-L-ornithine + 2-oxoglutarate = N-acetyl-L-glutamate 5-semialdehyde + L-glutamate. It functions in the pathway amino-acid biosynthesis; L-arginine biosynthesis; N(2)-acetyl-L-ornithine from L-glutamate: step 4/4. This chain is Acetylornithine aminotransferase 1, found in Bordetella parapertussis (strain 12822 / ATCC BAA-587 / NCTC 13253).